Reading from the N-terminus, the 847-residue chain is Nitrite reductase (NADH) large subunit (847 aa).

44–79 lines the FAD pocket; sequence YDRVHLSSYFSHHTAEELSLVREGFYEKHGIKVLVG. 193 to 225 provides a ligand contact to NAD(+); sequence LRRKIESMGVRVHTSKNTLEIVQEGVEARKTMR. [2Fe-2S] cluster is bound by residues Cys-425, Cys-427, Cys-459, and Cys-462. Residues Cys-641, Cys-647, Cys-681, and Cys-685 each coordinate [4Fe-4S] cluster. Siroheme is bound at residue Cys-685.

It belongs to the nitrite and sulfite reductase 4Fe-4S domain family. As to quaternary structure, homodimer which associates with NirD. The cofactor is siroheme. [2Fe-2S] cluster is required as a cofactor. [4Fe-4S] cluster serves as cofactor. It depends on FAD as a cofactor.

It carries out the reaction NH4(+) + 3 NAD(+) + 2 H2O = nitrite + 3 NADH + 5 H(+). The protein operates within nitrogen metabolism; nitrate reduction (assimilation). In Escherichia coli (strain K12), this protein is Nitrite reductase (NADH) large subunit (nirB).